A 176-amino-acid polypeptide reads, in one-letter code: Tubulin polymerization-promoting protein family member 3 (176 aa).

The tract at residues 126–152 (TDTSKYTGSHKERFDESGKGKGKGGRE) is disordered. A compositionally biased stretch (basic and acidic residues) spans 134-152 (SHKERFDESGKGKGKGGRE).

This sequence belongs to the TPPP family.

It is found in the cytoplasm. It localises to the cytoskeleton. In terms of biological role, regulator of microtubule dynamic that has microtubule bundling activity. The sequence is that of Tubulin polymerization-promoting protein family member 3 (tppp3) from Xenopus tropicalis (Western clawed frog).